Reading from the N-terminus, the 928-residue chain is Tyrosine-protein phosphatase 3 (928 aa).

Thr-75 bears the Phosphothreonine mark. A Rhodanese domain is found at 111 to 232 (PDEKVLLLDV…FKILFPDHIN (122 aa)). The disordered stretch occupies residues 247–307 (KSPKTNLMNS…PRNVLSDSPM (61 aa)). A Phosphoserine modification is found at Ser-248. 2 stretches are compositionally biased toward polar residues: residues 249–259 (PKTNLMNSLHN) and 265–275 (TATTPLSSPQM). Residues 280 to 289 (KVPDDSRSDH) are compositionally biased toward basic and acidic residues. The span at 290–307 (SNFSSSPSPRNVLSDSPM) shows a compositional bias: low complexity. Residues Ser-297 and Ser-368 each carry the phosphoserine modification. 2 disordered regions span residues 467–487 (LTST…NKVQ) and 672–713 (MRKN…NNNN). The Tyrosine-protein phosphatase domain occupies 502 to 878 (YKSMLSLESD…IFIYDCLLFY (377 aa)). Positions 672–691 (MRKNTMGTQNSSLYSAGVQG) are enriched in polar residues. Low complexity predominate over residues 692-713 (NSSNYSTDNDNDNDNNNNNNNN). The active-site Phosphocysteine intermediate is the Cys-804.

Belongs to the protein-tyrosine phosphatase family. Non-receptor class subfamily. As to quaternary structure, interacts with HOG1.

Its subcellular location is the cytoplasm. It catalyses the reaction O-phospho-L-tyrosyl-[protein] + H2O = L-tyrosyl-[protein] + phosphate. Major phosphatase responsible for tyrosine dephosphorylation of MAP kinases FUS3 and HOG1 to inactivate their activity; it also has important roles, along with MSG5, in the inactivation of FUS3 following pheromone stimulation. The chain is Tyrosine-protein phosphatase 3 (PTP3) from Saccharomyces cerevisiae (strain ATCC 204508 / S288c) (Baker's yeast).